Consider the following 231-residue polypeptide: Trypsin (231 aa).

A propeptide spans 1-8 (FPTDDDDK) (activation peptide). The region spanning 9–229 (IVGGYTCAAN…YVNWIQQTIA (221 aa)) is the Peptidase S1 domain. 6 cysteine pairs are disulfide-bonded: Cys15–Cys145, Cys33–Cys49, Cys117–Cys218, Cys124–Cys191, Cys156–Cys170, and Cys181–Cys205. The Charge relay system role is filled by His48. Glu60, Asn62, Val65, and Glu70 together coordinate Ca(2+). Catalysis depends on Asp92, which acts as the Charge relay system. The active-site Charge relay system is the Ser185.

The protein belongs to the peptidase S1 family. Requires Ca(2+) as cofactor.

The protein localises to the secreted. The protein resides in the extracellular space. The catalysed reaction is Preferential cleavage: Arg-|-Xaa, Lys-|-Xaa.. This Sus scrofa (Pig) protein is Trypsin.